Consider the following 360-residue polypeptide: DNA ADP-ribosyl glycohydrolase (360 aa).

Positions 1 to 155 (MLRFVRGNLL…VYEPVENPKA (155 aa)) constitute a Macro domain. ADP-D-ribose is bound by residues 8-9 (NL), 20-22 (TVN), 31-34 (VALQ), and T79. The active-site Nucleophile is the K80. 117–121 (GAGNG) serves as a coordination point for ADP-D-ribose. An interaction with DarT region spans residues 167-338 (LTPARAALLK…VALDALLKRG (172 aa)).

The protein belongs to the DarG ADP-ribosyl glycohydrolase family. Interacts (via C-terminus) with cognate toxin DarT; this heterodimeric complex neutralizes the toxic effect of DarT by preventing ssDNA binding to DarT and consequently inactivating the toxin by direct protein-protein interactions.

It carries out the reaction an N-(ADP-alpha-D-ribosyl)-thymidine in DNA + H2O = a thymidine in DNA + ADP-D-ribose. Antitoxin component of the hybrid type II/IV toxin-antitoxin (TA) system DarTG, which plays a crucial role in controlling bacterial growth and bacteriophage infection. De-ADP-ribosylates DNA modified on thymidine by its cognate toxin DarT, which neutralizes the activity of cognate toxin DarT. Upon expression in E.coli neutralizes the effect of cognate toxin DarT. Upon expression in M.tuberculosis neutralizes the toxic effects of endogenous DarT. This Thermus aquaticus (strain ATCC BAA-2747 / Y51MC23) protein is DNA ADP-ribosyl glycohydrolase.